The chain runs to 138 residues: Large ribosomal subunit protein uL16c (138 aa).

It belongs to the universal ribosomal protein uL16 family. In terms of assembly, part of the 50S ribosomal subunit.

It localises to the plastid. The protein localises to the chloroplast. This is Large ribosomal subunit protein uL16c from Tetradesmus obliquus (Green alga).